We begin with the raw amino-acid sequence, 1189 residues long: Tyrosine-protein phosphatase non-receptor type 14 (1189 aa).

Positions 21 to 306 (FVTRIRLLDS…TRHKFYKQNK (286 aa)) constitute an FERM domain. 7 positions are modified to phosphoserine: Ser314, Ser461, Ser486, Ser591, Ser593, Ser594, and Ser646. The segment at 744–775 (ARIPNRPPPEYPGPRKSVSNGALRQDQGTPLP) is disordered. Residues 760-771 (SVSNGALRQDQG) show a composition bias toward polar residues. Ser833 is modified (phosphoserine). Residues 911 to 1182 (VFTEYEQIPN…KFVYQVLVQF (272 aa)) enclose the Tyrosine-protein phosphatase domain. The Phosphocysteine intermediate role is filled by Cys1123. Substrate is bound by residues 1123–1129 (CSAGVGR) and Gln1167.

It belongs to the protein-tyrosine phosphatase family. Non-receptor class subfamily. Interacts with FLT4; the interaction is enhanced by stimulation with VEGFC. Interacts (via PPxY motifs) with YAP1 (via WW domains); this interaction leads to the cytoplasmic sequestration of YAP1 and inhibits its transcriptional coactivator activity. In terms of processing, ubiquitinated by the ECS (Elongin BC-CUL2/5-SOCS-box protein)/LRR1 E3 ligase complex and subsequently targeted to proteasomal degradation. As to expression, thymus; in cells of both hematopoietic and non-hematopoietic origins.

The protein localises to the cytoplasm. The protein resides in the cytoskeleton. It localises to the nucleus. It catalyses the reaction O-phospho-L-tyrosyl-[protein] + H2O = L-tyrosyl-[protein] + phosphate. Protein tyrosine phosphatase which may play a role in the regulation of lymphangiogenesis, cell-cell adhesion, cell-matrix adhesion, cell migration, cell growth and also regulates TGF-beta gene expression, thereby modulating epithelial-mesenchymal transition. Mediates beta-catenin dephosphorylation at adhesion junctions. Acts as a negative regulator of the oncogenic property of YAP, a downstream target of the hippo pathway, in a cell density-dependent manner. May function as a tumor suppressor. The sequence is that of Tyrosine-protein phosphatase non-receptor type 14 (Ptpn14) from Mus musculus (Mouse).